The primary structure comprises 147 residues: Large ribosomal subunit protein uL16 (147 aa).

Positions 1 to 20 are disordered; that stretch reads MLMPKKVKHRKVQRGRMKGK.

It belongs to the universal ribosomal protein uL16 family. Part of the 50S ribosomal subunit.

Its function is as follows. Binds 23S rRNA and is also seen to make contacts with the A and possibly P site tRNAs. The chain is Large ribosomal subunit protein uL16 from Clostridium kluyveri (strain ATCC 8527 / DSM 555 / NBRC 12016 / NCIMB 10680 / K1).